Here is a 447-residue protein sequence, read N- to C-terminus: C4-dicarboxylate transport protein (447 aa).

Helical transmembrane passes span 22–42 (FQVIVAIVLGAILGHYEPLVG), 52–72 (FINLVKMIIAPVIFLTIVTGI), 90–110 (AYFLFFSTLALIVGMIVAHVV), 159–179 (GNILQVLFIAVLFGIALASVG), 199–219 (LVHILMKAAPIGAFGAIAFTI), 232–252 (WLVGSFYLTAFLFVAVILGVV), 325–347 (LFIAQATNTELTLGHQIALLLVA), and 366–386 (AATLAVVPEVPVAGMALILGV).

Belongs to the dicarboxylate/amino acid:cation symporter (DAACS) (TC 2.A.23) family.

The protein localises to the cell inner membrane. Responsible for the transport of dicarboxylates such as succinate, fumarate, and malate from the periplasm across the membrane. In Stenotrophomonas maltophilia (strain R551-3), this protein is C4-dicarboxylate transport protein.